Here is a 446-residue protein sequence, read N- to C-terminus: 3-phosphoshikimate 1-carboxyvinyltransferase (446 aa).

Residues 1–20 (MIMAKPLSSRRAAPLAGSAP) are disordered. Residues K25, S26, and R30 each coordinate 3-phosphoshikimate. Residue K25 participates in phosphoenolpyruvate binding. 2 residues coordinate phosphoenolpyruvate: G98 and R126. Positions 171, 173, 324, and 351 each coordinate 3-phosphoshikimate. Phosphoenolpyruvate is bound at residue Q173. D324 (proton acceptor) is an active-site residue. 2 residues coordinate phosphoenolpyruvate: R355 and R399.

Belongs to the EPSP synthase family. Monomer.

The protein resides in the cytoplasm. It carries out the reaction 3-phosphoshikimate + phosphoenolpyruvate = 5-O-(1-carboxyvinyl)-3-phosphoshikimate + phosphate. Its pathway is metabolic intermediate biosynthesis; chorismate biosynthesis; chorismate from D-erythrose 4-phosphate and phosphoenolpyruvate: step 6/7. Functionally, catalyzes the transfer of the enolpyruvyl moiety of phosphoenolpyruvate (PEP) to the 5-hydroxyl of shikimate-3-phosphate (S3P) to produce enolpyruvyl shikimate-3-phosphate and inorganic phosphate. The polypeptide is 3-phosphoshikimate 1-carboxyvinyltransferase (Paramagnetospirillum magneticum (strain ATCC 700264 / AMB-1) (Magnetospirillum magneticum)).